Reading from the N-terminus, the 65-residue chain is Large ribosomal subunit protein uL29 (65 aa).

Belongs to the universal ribosomal protein uL29 family.

This Coxiella burnetii (strain CbuK_Q154) (Coxiella burnetii (strain Q154)) protein is Large ribosomal subunit protein uL29.